Reading from the N-terminus, the 565-residue chain is NAD-dependent malic enzyme (565 aa).

The active-site Proton donor is the Y104. R157 contacts NAD(+). K175 (proton acceptor) is an active-site residue. Residues E246, D247, and D270 each coordinate a divalent metal cation. NAD(+)-binding residues include D270 and N418.

It belongs to the malic enzymes family. In terms of assembly, homotetramer. It depends on Mg(2+) as a cofactor. Requires Mn(2+) as cofactor.

It catalyses the reaction (S)-malate + NAD(+) = pyruvate + CO2 + NADH. The catalysed reaction is oxaloacetate + H(+) = pyruvate + CO2. The sequence is that of NAD-dependent malic enzyme from Edwardsiella ictaluri (strain 93-146).